Reading from the N-terminus, the 473-residue chain is Fumarate hydratase class II (473 aa).

Residues serine 105 to threonine 107, histidine 130 to aspartate 133, serine 140 to asparagine 142, and threonine 188 each bind substrate. The Proton donor/acceptor role is filled by histidine 189. Serine 319 is a catalytic residue. Substrate is bound by residues serine 320 and lysine 325 to asparagine 327.

Belongs to the class-II fumarase/aspartase family. Fumarase subfamily. In terms of assembly, homotetramer.

The protein localises to the cytoplasm. It catalyses the reaction (S)-malate = fumarate + H2O. It functions in the pathway carbohydrate metabolism; tricarboxylic acid cycle; (S)-malate from fumarate: step 1/1. Functionally, involved in the TCA cycle. Catalyzes the stereospecific interconversion of fumarate to L-malate. This Xylella fastidiosa (strain Temecula1 / ATCC 700964) protein is Fumarate hydratase class II.